The following is a 203-amino-acid chain: Peptide deformylase (203 aa).

Residues cysteine 121 and histidine 163 each contribute to the Fe cation site. Glutamate 164 is a catalytic residue. Residue histidine 167 participates in Fe cation binding.

The protein belongs to the polypeptide deformylase family. Fe(2+) serves as cofactor.

It carries out the reaction N-terminal N-formyl-L-methionyl-[peptide] + H2O = N-terminal L-methionyl-[peptide] + formate. Its function is as follows. Removes the formyl group from the N-terminal Met of newly synthesized proteins. Requires at least a dipeptide for an efficient rate of reaction. N-terminal L-methionine is a prerequisite for activity but the enzyme has broad specificity at other positions. The sequence is that of Peptide deformylase from Prochlorococcus marinus (strain SARG / CCMP1375 / SS120).